Reading from the N-terminus, the 367-residue chain is MKSLFQRRASKVRETEAMNAPVPNNQKAELLQKVVEHVDITSYDARPIIDSMRKMSFSSRDTARAADIFNMALADKGCSTWLILAGSTSAGGCMHVYRDMVKNGMIDAVVATGASIVDMDFFEALGFKHYQAAGPVDDNVLRDNYIDRIYDTYIDEEELQACDHTILEICNKLEPRGYSSREFIWEMGKWLAEGNAKKEGSLIQTAYEEGVPIFCPAFVDSSAGFGLVKHQKEKIAEKKPYLMIDAVADFRELTDVKIAAGTTGLFMVGGGVPKNFAQDTVVCAEILGVEADMHKYAIQITVADVRDGACSSSTLKEAASWGKVSTTYEQMVFAEATTVVPLIASDAYWRKAWEGREKPRWNKLFGK.

The interval 1-23 is disordered; the sequence is MKSLFQRRASKVRETEAMNAPVP.

This sequence belongs to the deoxyhypusine synthase family.

The chain is Deoxyhypusine synthase-like protein from Caulobacter vibrioides (strain ATCC 19089 / CIP 103742 / CB 15) (Caulobacter crescentus).